The chain runs to 102 residues: Alpha-hemoglobin-stabilizing protein (102 aa).

The protein belongs to the AHSP family. Monomer. Forms a heterodimer with free alpha-hemoglobin. Does not bind beta-hemoglobin nor alpha(2)beta(2) hemoglobin A. Expressed in blood and bone marrow.

It localises to the cytoplasm. Its function is as follows. Acts as a chaperone to prevent the harmful aggregation of alpha-hemoglobin during normal erythroid cell development. Specifically protects free alpha-hemoglobin from precipitation. It is predicted to modulate pathological states of alpha-hemoglobin excess such as beta-thalassemia. The protein is Alpha-hemoglobin-stabilizing protein (AHSP) of Homo sapiens (Human).